The primary structure comprises 338 residues: Phenylalanine--tRNA ligase alpha subunit (338 aa).

Glutamate 252 is a Mg(2+) binding site.

This sequence belongs to the class-II aminoacyl-tRNA synthetase family. Phe-tRNA synthetase alpha subunit type 1 subfamily. Tetramer of two alpha and two beta subunits. It depends on Mg(2+) as a cofactor.

It localises to the cytoplasm. The catalysed reaction is tRNA(Phe) + L-phenylalanine + ATP = L-phenylalanyl-tRNA(Phe) + AMP + diphosphate + H(+). This chain is Phenylalanine--tRNA ligase alpha subunit (pheS), found in Aquifex aeolicus (strain VF5).